Reading from the N-terminus, the 265-residue chain is Hydroxyethylthiazole kinase (265 aa).

Met-43 serves as a coordination point for substrate. Residues Lys-118 and Thr-165 each contribute to the ATP site. Gly-192 contributes to the substrate binding site.

The protein belongs to the Thz kinase family. Requires Mg(2+) as cofactor.

It catalyses the reaction 5-(2-hydroxyethyl)-4-methylthiazole + ATP = 4-methyl-5-(2-phosphooxyethyl)-thiazole + ADP + H(+). It functions in the pathway cofactor biosynthesis; thiamine diphosphate biosynthesis; 4-methyl-5-(2-phosphoethyl)-thiazole from 5-(2-hydroxyethyl)-4-methylthiazole: step 1/1. In terms of biological role, catalyzes the phosphorylation of the hydroxyl group of 4-methyl-5-beta-hydroxyethylthiazole (THZ). The protein is Hydroxyethylthiazole kinase of Pyrococcus abyssi (strain GE5 / Orsay).